The primary structure comprises 261 residues: Imidazole glycerol phosphate synthase subunit HisF (261 aa).

Residues Asp-11 and Asp-130 contribute to the active site.

This sequence belongs to the HisA/HisF family. In terms of assembly, heterodimer of HisH and HisF.

Its subcellular location is the cytoplasm. It catalyses the reaction 5-[(5-phospho-1-deoxy-D-ribulos-1-ylimino)methylamino]-1-(5-phospho-beta-D-ribosyl)imidazole-4-carboxamide + L-glutamine = D-erythro-1-(imidazol-4-yl)glycerol 3-phosphate + 5-amino-1-(5-phospho-beta-D-ribosyl)imidazole-4-carboxamide + L-glutamate + H(+). It functions in the pathway amino-acid biosynthesis; L-histidine biosynthesis; L-histidine from 5-phospho-alpha-D-ribose 1-diphosphate: step 5/9. IGPS catalyzes the conversion of PRFAR and glutamine to IGP, AICAR and glutamate. The HisF subunit catalyzes the cyclization activity that produces IGP and AICAR from PRFAR using the ammonia provided by the HisH subunit. The sequence is that of Imidazole glycerol phosphate synthase subunit HisF from Limosilactobacillus fermentum (strain NBRC 3956 / LMG 18251) (Lactobacillus fermentum).